Reading from the N-terminus, the 307-residue chain is PCP degradation transcriptional activation protein (307 aa).

The HTH lysR-type domain occupies 6-63; that stretch reads LPLGHLMVFDALYRHGSAGKAAHALSMPQPTLSRWLAQLRTHFDDPLFVRTRSGMEPT. The segment at residues 23–42 is a DNA-binding region (H-T-H motif); that stretch reads AGKAAHALSMPQPTLSRWLA.

This sequence belongs to the LysR transcriptional regulatory family.

Its function is as follows. Transcriptional activator for the pcpA, pcpB and pcpE genes for pentachlorophenol (PCP) degradation. Essential for PCP degradation. This chain is PCP degradation transcriptional activation protein (pcpR), found in Sphingobium chlorophenolicum.